The following is an 823-amino-acid chain: Ubiquitin carboxyl-terminal hydrolase 16 (823 aa).

A UBP-type zinc finger spans residues 22–142 (PVCRHIRKGL…QVVDYVRKQA (121 aa)). Residues C24, H26, C48, C51, C74, C77, C82, H90, H94, H103, C116, and C119 each coordinate Zn(2+). A Glycyl lysine isopeptide (Lys-Gly) (interchain with G-Cter in SUMO2) cross-link involves residue K140. Positions 146 to 189 (TPKPAEKDNGNIELENKKLEKESKNEQEREKKENMAKENPPMNS) are disordered. Over residues 149-181 (PAEKDNGNIELENKKLEKESKNEQEREKKENMA) the composition is skewed to basic and acidic residues. S189 carries the post-translational modification Phosphoserine. Positions 196-822 (KGLSNLGNTC…QAYLLFYERI (627 aa)) constitute a USP domain. C205 functions as the Nucleophile in the catalytic mechanism. A compositionally biased stretch (basic and acidic residues) spans 394–408 (SGKKSVNDKNLKKTV). Residues 394–460 (SGKKSVNDKN…AKNQRRQQKI (67 aa)) form a disordered region. The span at 409–420 (EDEDQDSEEEKD) shows a compositional bias: acidic residues. S415 is modified (phosphoserine). Basic and acidic residues predominate over residues 421–430 (NDSYIKERSD). Basic residues predominate over residues 438-458 (HLQKKAKKQAKKQAKNQRRQQ). Phosphoserine occurs at positions 531 and 552. Position 554 is a phosphothreonine (T554). H758 acts as the Proton acceptor in catalysis.

The protein belongs to the peptidase C19 family. USP16 subfamily. As to quaternary structure, homotetramer. Associates with late pre-40S ribosomes. Interacts with CEP78; promoting deubiquitination of tektins. Phosphorylated at the onset of mitosis and dephosphorylated during the metaphase/anaphase transition. Phosphorylation by AURKB enhances the deubiquitinase activity. Present in all the tissues examined including fetal brain, lung, liver, kidney, and adult heart, brain, placenta, lung, liver, skeletal muscle, kidney and pancreas.

The protein resides in the nucleus. It localises to the cytoplasm. It carries out the reaction Thiol-dependent hydrolysis of ester, thioester, amide, peptide and isopeptide bonds formed by the C-terminal Gly of ubiquitin (a 76-residue protein attached to proteins as an intracellular targeting signal).. In terms of biological role, specifically deubiquitinates 'Lys-120' of histone H2A (H2AK119Ub), a specific tag for epigenetic transcriptional repression, thereby acting as a coactivator. Deubiquitination of histone H2A is a prerequisite for subsequent phosphorylation at 'Ser-11' of histone H3 (H3S10ph), and is required for chromosome segregation when cells enter into mitosis. In resting B- and T-lymphocytes, phosphorylation by AURKB leads to enhance its activity, thereby maintaining transcription in resting lymphocytes. Regulates Hox gene expression via histone H2A deubiquitination. Prefers nucleosomal substrates. Does not deubiquitinate histone H2B. Also deubiquitinates non-histone proteins, such as ribosomal protein RPS27A: deubiquitination of monoubiquitinated RPS27A promotes maturation of the 40S ribosomal subunit. Also mediates deubiquitination of tektin proteins (TEKT1, TEKT2, TEK3, TEKT4 and TEKT5), promoting their stability. This Homo sapiens (Human) protein is Ubiquitin carboxyl-terminal hydrolase 16.